Here is a 168-residue protein sequence, read N- to C-terminus: Cell division inhibitor SulA (168 aa).

The interval 1-20 is disordered; the sequence is MSTQSVSSHNIESSSFSANQ. The ftsZ binding stretch occupies residues 105 to 111; the sequence is ALLTGNY. The tract at residues 161-168 is lon protease binding; the sequence is KIHSTLYH.

It belongs to the SulA family. As to quaternary structure, interacts with FtsZ. Post-translationally, is rapidly cleaved and degraded by the Lon protease once DNA damage is repaired.

Component of the SOS system and an inhibitor of cell division. Accumulation of SulA causes rapid cessation of cell division and the appearance of long, non-septate filaments. In the presence of GTP, binds a polymerization-competent form of FtsZ in a 1:1 ratio, thus inhibiting FtsZ polymerization and therefore preventing it from participating in the assembly of the Z ring. This mechanism prevents the premature segregation of damaged DNA to daughter cells during cell division. This chain is Cell division inhibitor SulA, found in Pectobacterium atrosepticum (strain SCRI 1043 / ATCC BAA-672) (Erwinia carotovora subsp. atroseptica).